We begin with the raw amino-acid sequence, 90 residues long: Probable Fe(2+)-trafficking protein (90 aa).

This sequence belongs to the Fe(2+)-trafficking protein family.

Its function is as follows. Could be a mediator in iron transactions between iron acquisition and iron-requiring processes, such as synthesis and/or repair of Fe-S clusters in biosynthetic enzymes. This Nitrosomonas europaea (strain ATCC 19718 / CIP 103999 / KCTC 2705 / NBRC 14298) protein is Probable Fe(2+)-trafficking protein.